The primary structure comprises 672 residues: Spermatid perinuclear RNA-binding protein (672 aa).

The DZF domain occupies 5-363; the sequence is RSFANDDRHV…ALKRPFEDGL (359 aa). Disordered stretches follow at residues 52-73 and 349-371; these read TNKG…GENY and GAGS…DPNK. Residues 357–371 show a composition bias toward basic and acidic residues; sequence RPFEDGLGDDKDPNK. The DRBM 1 domain occupies 387 to 453; sequence DLMNALMRLN…AVKVLQAMGY (67 aa). The span at 466 to 476 shows a compositional bias: basic and acidic residues; the sequence is SDEKSDNESKN. The segment at 466–499 is disordered; it reads SDEKSDNESKNETVSSNSSNNTGNSTTETSSTLE. The span at 477-497 shows a compositional bias: low complexity; that stretch reads ETVSSNSSNNTGNSTTETSST. The region spanning 510-576 is the DRBM 2 domain; the sequence is SGKNPVMELN…ALAALEKLFS (67 aa). Asymmetric dimethylarginine occurs at positions 612 and 617.

Interacts with EIF2AK2. Associates with microtubules; it is unsure whether such interaction is direct or indirect.

Its subcellular location is the cytoplasm. Its function is as follows. Involved in spermatogenesis and sperm function. Plays a role in regulation of cell growth. Binds to double-stranded DNA and RNA. Binds most efficiently to poly(I:C) RNA than to poly(dI:dC) DNA. Binds also to single-stranded poly(G) RNA. Binds non-specifically to the mRNA PRM1 3'-UTR and adenovirus VA RNA. This Pongo abelii (Sumatran orangutan) protein is Spermatid perinuclear RNA-binding protein (STRBP).